A 554-amino-acid polypeptide reads, in one-letter code: Probable ATP-binding cassette sub-family F member 3 homolog (554 aa).

ABC transporter domains lie at 89–285 and 351–554; these read GDLH…ASAR and IEFV…GLGV. ATP contacts are provided by residues 122–129 and 383–390; these read GRNGIGKT and GANGQGKS.

The protein belongs to the ABC transporter superfamily. ABCF family. EF3 subfamily.

This Encephalitozoon cuniculi (strain GB-M1) (Microsporidian parasite) protein is Probable ATP-binding cassette sub-family F member 3 homolog.